The chain runs to 188 residues: Large ribosomal subunit protein eL18A (188 aa).

The interval glycine 153 to asparagine 188 is disordered. The segment covering arginine 178–asparagine 188 has biased composition (basic residues).

Belongs to the eukaryotic ribosomal protein eL18 family. As to quaternary structure, component of the large ribosomal subunit.

It is found in the cytoplasm. In terms of biological role, component of the large ribosomal subunit. The ribosome is a large ribonucleoprotein complex responsible for the synthesis of proteins in the cell. This is Large ribosomal subunit protein eL18A (rpl18-a) from Xenopus laevis (African clawed frog).